A 307-amino-acid chain; its full sequence is Taste receptor type 2 member 41 (307 aa).

The Extracellular segment spans residues Met-1–Ala-7. Residues Phe-8–Val-28 traverse the membrane as a helical segment. Topologically, residues Leu-29–Arg-40 are cytoplasmic. A helical transmembrane segment spans residues Leu-41–Val-61. The Extracellular segment spans residues Gly-62–His-88. Residues Trp-89–Val-109 form a helical membrane-spanning segment. Residues Lys-110–Trp-129 are Cytoplasmic-facing. A helical transmembrane segment spans residues Val-130 to Trp-150. Residues Val-151–Ser-183 lie on the Extracellular side of the membrane. A glycan (N-linked (GlcNAc...) asparagine) is linked at Asn-167. The chain crosses the membrane as a helical span at residues Leu-184–Ile-204. Topologically, residues Asn-205 to Lys-234 are cytoplasmic. The helical transmembrane segment at Ser-235 to Thr-255 threads the bilayer. At Lys-256–Phe-264 the chain is on the extracellular side. A helical transmembrane segment spans residues Tyr-265–Phe-285. Residues Ser-286–Ala-307 lie on the Cytoplasmic side of the membrane.

It belongs to the G-protein coupled receptor T2R family.

It is found in the membrane. Its function is as follows. Receptor that may play a role in the perception of bitterness and is gustducin-linked. May play a role in sensing the chemical composition of the gastrointestinal content. The activity of this receptor may stimulate alpha gustducin, mediate PLC-beta-2 activation and lead to the gating of TRPM5. The protein is Taste receptor type 2 member 41 (TAS2R41) of Pongo pygmaeus (Bornean orangutan).